We begin with the raw amino-acid sequence, 71 residues long: Exodeoxyribonuclease 7 small subunit (71 aa).

Belongs to the XseB family. In terms of assembly, heterooligomer composed of large and small subunits.

It localises to the cytoplasm. It carries out the reaction Exonucleolytic cleavage in either 5'- to 3'- or 3'- to 5'-direction to yield nucleoside 5'-phosphates.. Its function is as follows. Bidirectionally degrades single-stranded DNA into large acid-insoluble oligonucleotides, which are then degraded further into small acid-soluble oligonucleotides. The sequence is that of Exodeoxyribonuclease 7 small subunit from Clostridium botulinum (strain Loch Maree / Type A3).